We begin with the raw amino-acid sequence, 198 residues long: Fucoxanthin-chlorophyll a-c binding protein B, chloroplastic (198 aa).

A chloroplast-targeting transit peptide spans 1-31; that stretch reads MKFTVFASLFASAAAFAPAQQAARTSVATNM. The next 3 membrane-spanning stretches (helical) occupy residues 73 to 94, 114 to 134, and 174 to 196; these read ISML…GGDI, IPQA…TSVM, and GRAA…NILP.

The protein belongs to the fucoxanthin chlorophyll protein family. As to quaternary structure, the LHC complex of chromophytic algae is composed of fucoxanthin, chlorophyll A and C bound non-covalently by fucoxanthin chlorophyll proteins (FCPs). The ratio of the pigments in LHC; fucoxanthin: chlorophyll C: chlorophyll A; (0.6-1): (0.1-0.3): (1).

It is found in the plastid. Its subcellular location is the chloroplast thylakoid membrane. In terms of biological role, the light-harvesting complex (LHC) functions as a light receptor, it captures and delivers excitation energy to photosystems with which it is closely associated. Energy is transferred from the carotenoid and chlorophyll C (or B) to chlorophyll A and the photosynthetic reaction centers where it is used to synthesize ATP and reducing power. This is Fucoxanthin-chlorophyll a-c binding protein B, chloroplastic (FCPB) from Phaeodactylum tricornutum (Diatom).